Reading from the N-terminus, the 105-residue chain is uncharacterized protein (105 aa).

This is an uncharacterized protein from Fowlpox virus (strain NVSL) (FPV).